A 223-amino-acid chain; its full sequence is Ribonuclease T (223 aa).

The 175-residue stretch at 20-194 folds into the Exonuclease domain; it reads VVIDVETAGF…YDTERTAELF (175 aa). Mg(2+) contacts are provided by Asp23, Glu25, His181, and Asp186. The active-site Proton donor/acceptor is His181.

The protein belongs to the RNase T family. Homodimer. The cofactor is Mg(2+).

Functionally, trims short 3' overhangs of a variety of RNA species, leaving a one or two nucleotide 3' overhang. Responsible for the end-turnover of tRNA: specifically removes the terminal AMP residue from uncharged tRNA (tRNA-C-C-A). Also appears to be involved in tRNA biosynthesis. In Shewanella sp. (strain W3-18-1), this protein is Ribonuclease T.